Consider the following 107-residue polypeptide: DNA polymerase delta subunit 4 (107 aa).

The short motif at 1–16 is the PCNA-interaction protein motif (PIP box) element; the sequence is MGRKRFITDSYPVVKK. The tract at residues 1–40 is disordered; that stretch reads MGRKRFITDSYPVVKKREGPPGHSKGELAPELGEDTQSLS. The span at 15–28 shows a compositional bias: basic and acidic residues; it reads KKREGPPGHSKGEL.

It belongs to the DNA polymerase delta subunit 4 family. Component of the tetrameric DNA polymerase delta complex (Pol-delta4), which consists of POLD1/p125, POLD2/p50, POLD3/p66/p68 and POLD4/p12, with POLD1 bearing DNA polymerase and 3' to 5' proofreading exonuclease activities. Within this complex, directly interacts with POLD1 and POLD2. Directly interacts with PCNA, as do POLD1 and POLD3; this interaction stimulates Pol-delta4 polymerase activity. As POLD1 and POLD2, directly interacts with WRNIP1; this interaction stimulates DNA polymerase delta-mediated DNA synthesis, independently of the presence of PCNA, possibly by increasing initiation frequency. Upon genotoxic stress induced by DNA damaging agents or by replication stress, POLD4 is proteolytically degraded and Pol-delta4 is converted into a trimeric form of the complex (Pol-delta3) that has an increased proofreading activity. The DNA polymerase delta complex interacts with POLDIP2; this interaction is probably mediated through direct binding to POLD2. In terms of processing, ubiquitinated; undergoes 'Lys-48'-linked polyubiquitination in response to UV irradiation or treatment with an alkylating agent, leading to proteasomal degradation. This modification is mediated, at least in part, by RNF8. Ubiquitinated; undergoes 'Lys-48'-linked ubiquitination in response to UV irradiation, leading to proteasomal degradation. This modification is partly mediated by RNF8 and by the DCX(DTL) E3 ubiquitin ligase complex (also called CRL4(CDT2)). Efficient degradation requires the presence of PCNA and is required for the inhibition of fork progression after DNA damage.

The protein localises to the nucleus. Its function is as follows. As a component of the tetrameric DNA polymerase delta complex (Pol-delta4), plays a role in high fidelity genome replication and repair. Within this complex, increases the rate of DNA synthesis and decreases fidelity by regulating POLD1 polymerase and proofreading 3' to 5' exonuclease activity. Pol-delta4 participates in Okazaki fragment processing, through both the short flap pathway, as well as a nick translation system. Under conditions of DNA replication stress, required for the repair of broken replication forks through break-induced replication (BIR), a mechanism that may induce segmental genomic duplications of up to 200 kb. Involved in Pol-delta4 translesion synthesis (TLS) of templates carrying O6-methylguanine or abasic sites. Its degradation in response to DNA damage is required for the inhibition of fork progression and cell survival. The polypeptide is DNA polymerase delta subunit 4 (Pold4) (Mus musculus (Mouse)).